The chain runs to 103 residues: Mitochondrial import inner membrane translocase subunit Tim10 B (103 aa).

The short motif at 28 to 52 is the Twin CX3C motif element; sequence CFQRCVPSLHHRALDAEEEACLHSC. Intrachain disulfides connect Cys-28–Cys-52 and Cys-32–Cys-48.

This sequence belongs to the small Tim family. As to quaternary structure, component of the TIM22 complex, which core is composed of TIMM22, associated with TIMM10 (TIMM10A and/or TIMM10B), TIMM9, AGK and TIMM29. In terms of tissue distribution, ubiquitous, with highest expression in heart, kidney, liver and skeletal muscle.

It is found in the mitochondrion inner membrane. Functionally, component of the TIM22 complex, a complex that mediates the import and insertion of multi-pass transmembrane proteins into the mitochondrial inner membrane. The TIM22 complex forms a twin-pore translocase that uses the membrane potential as the external driving force. In the TIM22 complex, it may act as a docking point for the soluble 70 kDa complex that guides the target proteins in transit through the aqueous mitochondrial intermembrane space. The protein is Mitochondrial import inner membrane translocase subunit Tim10 B (TIMM10B) of Homo sapiens (Human).